The chain runs to 385 residues: Probable thioesterase PNKD (385 aa).

Over residues 31–42 (NKASQNRSRALQ) the composition is skewed to polar residues. Residues 31 to 57 (NKASQNRSRALQSHSSPECKEEPEPLS) form a disordered region. Residues His172, His174, Asp176, His177, His229, Asp253, and His291 each coordinate Zn(2+).

The protein belongs to the metallo-beta-lactamase superfamily. Glyoxalase II family. Zn(2+) is required as a cofactor. Post-translationally, undergoes cleavage at the N-terminus.

The protein resides in the cell membrane. Its subcellular location is the mitochondrion. It catalyses the reaction a thioester + H2O = a thiol + a carboxylate + H(+). Its function is as follows. Probable thioesterase that may play a role in cellular detoxification processes; it likely acts on a yet-unknown alpha-hydroxythioester substrate. In vitro, it is able to catalyze the hydrolysis of S-D-lactoyl-glutathione to form glutathione and D-lactic acid at very low rate, though this reaction is not physiologically relevant in vivo. The chain is Probable thioesterase PNKD (PNKD) from Bos taurus (Bovine).